We begin with the raw amino-acid sequence, 258 residues long: Small ribosomal subunit protein uS2 (258 aa).

Residues 222–258 form a disordered region; it reads GKALRDQDEAEQVEPVSQEEKDEVVAEAMSEADFEEQ.

Belongs to the universal ribosomal protein uS2 family.

The chain is Small ribosomal subunit protein uS2 from Campylobacter fetus subsp. fetus (strain 82-40).